A 78-amino-acid polypeptide reads, in one-letter code: U-scoloptoxin(04)-Er1b (78 aa).

Residues 1-24 (MTRHLIFAAVLLVCLFVCWNAVGA) form the signal peptide. Residues 25-28 (QDAR) constitute a propeptide that is removed on maturation.

This sequence belongs to the scoloptoxin-04 family. Post-translationally, contains 2 disulfide bonds. Expressed by the venom gland.

It localises to the secreted. The polypeptide is U-scoloptoxin(04)-Er1b (Ethmostigmus rubripes (Giant centipede)).